A 251-amino-acid chain; its full sequence is Tachykinins (251 aa).

A signal peptide spans 1–21 (MGAPRTCLIFITIQLVSLAYA). Residues 22–25 (QEVS) constitute a propeptide that is removed on maturation. Arginine amide is present on Arg-36. Positions 39–50 (KYFDEEGIEQFY) are excised as a propeptide. Lys-61 is modified (lysine amide). The propeptide occupies 65 to 163 (SLQDILEAPE…MEPEQSNDLD (99 aa)). Arg-176 bears the Arginine amide mark. A propeptide spanning residues 180–183 (SINN) is cleaved from the precursor. Arg-199 bears the Arginine amide mark. Positions 203-223 (DLKNSNAHEIKFLVDQNGPLP) are excised as a propeptide. Arg-235 is modified (arginine amide). A propeptide spanning residues 239-251 (WTDEPSLEMDMPN) is cleaved from the precursor.

Belongs to the tachykinin family. Tachykinin-related peptide 1: Expressed in antennal lobe (AL) and gnathal ganglion (GNG) (at protein level). Expression in AL detected in all animals, in GNG in most animals (at protein level). Not expressed in corpora cardiaca (CC) and corpora allata (CA) (at protein level). Tachykinin-related peptide 2: Expressed in antennal lobe (AL) corpora cardiaca (CC) and corpora allata (CA) with expression detected in few animals (at protein level). Not expressed in gnathal ganglion (GNG) (at protein level). Tachykinin-related peptide 4: Expressed in corpora cardiaca (CC), corpora allata (CA), antennal lobe (AL) and gnathal ganglion (GNG) (at protein level). Expression in AL and GNG detected in most animals, in CC and CA detected in few animals (at protein level). Tachykinin-related peptide 5: Expressed in corpora cardiaca (CC), corpora allata (CA), antennal lobe (AL) and gnathal ganglion (GNG) (at protein level). Expression in CC and CA detected in some animals, in AL and GNG in few animals (at protein level). Tachykinin-related peptide 6: Expressed in antennal lobe (AL) and gnathal ganglion (GNG) (at protein level). Expression in AL detected in all animals, in GNG in some animals (at protein level). Not expressed in corpora cardiaca (CC) and corpora allata (CA) (at protein level).

It localises to the secreted. Tachykinins are active peptides which excite neurons, evoke behavioral responses, are potent vasodilators and secretagogues, and contract (directly or indirectly) many smooth muscles. This chain is Tachykinins, found in Agrotis ipsilon (Black cutworm moth).